Reading from the N-terminus, the 224-residue chain is Uracil-DNA glycosylase 2 (224 aa).

D64 acts as the Proton acceptor in catalysis.

Belongs to the uracil-DNA glycosylase (UDG) superfamily. UNG family.

It localises to the cytoplasm. It carries out the reaction Hydrolyzes single-stranded DNA or mismatched double-stranded DNA and polynucleotides, releasing free uracil.. Functionally, excises uracil residues from the DNA which can arise as a result of misincorporation of dUMP residues by DNA polymerase or due to deamination of cytosine. The polypeptide is Uracil-DNA glycosylase 2 (Listeria innocua serovar 6a (strain ATCC BAA-680 / CLIP 11262)).